Here is a 443-residue protein sequence, read N- to C-terminus: Thymidine phosphorylase (443 aa).

Belongs to the thymidine/pyrimidine-nucleoside phosphorylase family. As to quaternary structure, homodimer.

It catalyses the reaction thymidine + phosphate = 2-deoxy-alpha-D-ribose 1-phosphate + thymine. It functions in the pathway pyrimidine metabolism; dTMP biosynthesis via salvage pathway; dTMP from thymine: step 1/2. The enzymes which catalyze the reversible phosphorolysis of pyrimidine nucleosides are involved in the degradation of these compounds and in their utilization as carbon and energy sources, or in the rescue of pyrimidine bases for nucleotide synthesis. This is Thymidine phosphorylase from Shewanella putrefaciens (strain CN-32 / ATCC BAA-453).